We begin with the raw amino-acid sequence, 720 residues long: Photosystem I P700 chlorophyll a apoprotein A1 (720 aa).

8 consecutive transmembrane segments (helical) span residues 61–84, 147–170, 186–210, 282–300, 337–360, 376–402, 424–446, and 522–540; these read VFSA…FHGA, LYCT…FHYH, LNHH…HVSL, TAHH…GHMY, WHAQ…HHMY, LSLF…IFMV, AIVS…LYIH, and FLVH…LILL. [4Fe-4S] cluster-binding residues include Cys-564 and Cys-573. 2 helical membrane-spanning segments follow: residues 580–601 and 655–677; these read HVFL…HFSW and LSAY…MFLF. Residue His-666 coordinates chlorophyll a'. Chlorophyll a contacts are provided by Met-674 and Tyr-682. Residue Trp-683 participates in phylloquinone binding. Residues 715-720 form a helical membrane-spanning segment; sequence AVGVAH.

The protein belongs to the PsaA/PsaB family. As to quaternary structure, the PsaA/B heterodimer binds the P700 chlorophyll special pair and subsequent electron acceptors. PSI consists of a core antenna complex that captures photons, and an electron transfer chain that converts photonic excitation into a charge separation. The eukaryotic PSI reaction center is composed of at least 11 subunits. The cofactor is P700 is a chlorophyll a/chlorophyll a' dimer, A0 is one or more chlorophyll a, A1 is one or both phylloquinones and FX is a shared 4Fe-4S iron-sulfur center..

The protein resides in the plastid. The protein localises to the chloroplast thylakoid membrane. The catalysed reaction is reduced [plastocyanin] + hnu + oxidized [2Fe-2S]-[ferredoxin] = oxidized [plastocyanin] + reduced [2Fe-2S]-[ferredoxin]. In terms of biological role, psaA and PsaB bind P700, the primary electron donor of photosystem I (PSI), as well as the electron acceptors A0, A1 and FX. PSI is a plastocyanin-ferredoxin oxidoreductase, converting photonic excitation into a charge separation, which transfers an electron from the donor P700 chlorophyll pair to the spectroscopically characterized acceptors A0, A1, FX, FA and FB in turn. Oxidized P700 is reduced on the lumenal side of the thylakoid membrane by plastocyanin. The polypeptide is Photosystem I P700 chlorophyll a apoprotein A1 (Sequoia sempervirens (California redwood)).